The following is a 457-amino-acid chain: GTPase Der (457 aa).

2 EngA-type G domains span residues 4–169 (PTIA…PENN) and 177–352 (IMMS…NQHR). GTP contacts are provided by residues 10 to 17 (GRPNVGKS), 57 to 61 (DTGGL), 120 to 123 (NKCE), 183 to 190 (GRPNVGKS), 230 to 234 (DTAGI), and 295 to 298 (NKWD). The 86-residue stretch at 353-438 (RRVTTSVVNE…PLILLWRGKQ (86 aa)) folds into the KH-like domain.

The protein belongs to the TRAFAC class TrmE-Era-EngA-EngB-Septin-like GTPase superfamily. EngA (Der) GTPase family. In terms of assembly, associates with the 50S ribosomal subunit.

Functionally, GTPase that plays an essential role in the late steps of ribosome biogenesis. The sequence is that of GTPase Der from Prochlorococcus marinus (strain MIT 9215).